We begin with the raw amino-acid sequence, 325 residues long: uncharacterized protein (325 aa).

Belongs to the mgp1/MG371 family.

This is an uncharacterized protein from Mycoplasma pneumoniae (strain ATCC 29342 / M129 / Subtype 1) (Mycoplasmoides pneumoniae).